We begin with the raw amino-acid sequence, 89 residues long: UPF0473 protein Helmi_02360 (89 aa).

It belongs to the UPF0473 family.

The chain is UPF0473 protein Helmi_02360 from Heliobacterium modesticaldum (strain ATCC 51547 / Ice1).